The following is a 236-amino-acid chain: MNSLSYLNQDQQSFPPPEQALSDPNGLLAVGGDLQPERLLNAYYNGIFPWFNQDDPILWWSPDPRAVFAPGNLRVSRSLIKYLKKQSWTFSINKQFPAVIRGCAAPRAKQEETWISDDIQQAYLSLHQQGHAHSIEVWEDDILIGGLYGLAIGQVFCGESMFHLRTNASKAAMIVLQQHLLRCGFKLIDAQVENPHLDSLGAKSIKRKDFLTLLKHLRDGDVNPDSWLTTEVPIEL.

A compositionally biased stretch (polar residues) spans 1–13 (MNSLSYLNQDQQS). Residues 1-22 (MNSLSYLNQDQQSFPPPEQALS) are disordered.

It belongs to the L/F-transferase family.

Its subcellular location is the cytoplasm. The enzyme catalyses N-terminal L-lysyl-[protein] + L-leucyl-tRNA(Leu) = N-terminal L-leucyl-L-lysyl-[protein] + tRNA(Leu) + H(+). It carries out the reaction N-terminal L-arginyl-[protein] + L-leucyl-tRNA(Leu) = N-terminal L-leucyl-L-arginyl-[protein] + tRNA(Leu) + H(+). The catalysed reaction is L-phenylalanyl-tRNA(Phe) + an N-terminal L-alpha-aminoacyl-[protein] = an N-terminal L-phenylalanyl-L-alpha-aminoacyl-[protein] + tRNA(Phe). Its function is as follows. Functions in the N-end rule pathway of protein degradation where it conjugates Leu, Phe and, less efficiently, Met from aminoacyl-tRNAs to the N-termini of proteins containing an N-terminal arginine or lysine. This is Leucyl/phenylalanyl-tRNA--protein transferase from Shewanella piezotolerans (strain WP3 / JCM 13877).